Here is a 360-residue protein sequence, read N- to C-terminus: Chorismate synthase (360 aa).

NADP(+)-binding residues include Arg-48 and Arg-54. Residues 125-127 (RSS), 246-247 (NA), Gly-286, 301-305 (KPTSS), and Arg-327 contribute to the FMN site.

It belongs to the chorismate synthase family. Homotetramer. FMNH2 serves as cofactor.

The catalysed reaction is 5-O-(1-carboxyvinyl)-3-phosphoshikimate = chorismate + phosphate. It functions in the pathway metabolic intermediate biosynthesis; chorismate biosynthesis; chorismate from D-erythrose 4-phosphate and phosphoenolpyruvate: step 7/7. Functionally, catalyzes the anti-1,4-elimination of the C-3 phosphate and the C-6 proR hydrogen from 5-enolpyruvylshikimate-3-phosphate (EPSP) to yield chorismate, which is the branch point compound that serves as the starting substrate for the three terminal pathways of aromatic amino acid biosynthesis. This reaction introduces a second double bond into the aromatic ring system. The chain is Chorismate synthase from Actinobacillus pleuropneumoniae serotype 7 (strain AP76).